The primary structure comprises 490 residues: 7-ethoxycoumarin O-deethylase (490 aa).

Cysteine 432 serves as a coordination point for heme.

It belongs to the cytochrome P450 family. Heme is required as a cofactor.

In terms of biological role, capable of dealkylating a model xenobiotic compound, 7-ethoxycoumarin. Metabolizes with high efficiency a wide range of xenobiotics, including alkoxycoumarins, alkoxyresorufins, and several herbicides of the class of phenylureas. Catalyzes the double N-dealkylation (oxidative N-demethylation) of phenylureas such as chlortoluron and isoproturon with turnover rates comparable to those reported for physiological substrates and produces non-phytotoxic compounds. Could be used for control of herbicide tolerance and selectivity, as well as soil and groundwater bioremediation. In Helianthus tuberosus (Jerusalem artichoke), this protein is 7-ethoxycoumarin O-deethylase (CYP76B1).